Consider the following 265-residue polypeptide: tRNA (guanine-N(7)-)-methyltransferase (265 aa).

Basic and acidic residues predominate over residues 1-16 (MNHDDPNASGVPHDDA). A disordered region spans residues 1-40 (MNHDDPNASGVPHDDANDAAPASASDAARATGHADDESSP). Positions 18-31 (DAAPASASDAARAT) are enriched in low complexity. Positions 95, 120, 147, and 170 each coordinate S-adenosyl-L-methionine. D170 is a catalytic residue. Residues K174, D206, and 241–244 (TKFE) each bind substrate.

It belongs to the class I-like SAM-binding methyltransferase superfamily. TrmB family.

It carries out the reaction guanosine(46) in tRNA + S-adenosyl-L-methionine = N(7)-methylguanosine(46) in tRNA + S-adenosyl-L-homocysteine. It functions in the pathway tRNA modification; N(7)-methylguanine-tRNA biosynthesis. Catalyzes the formation of N(7)-methylguanine at position 46 (m7G46) in tRNA. This Burkholderia thailandensis (strain ATCC 700388 / DSM 13276 / CCUG 48851 / CIP 106301 / E264) protein is tRNA (guanine-N(7)-)-methyltransferase.